Consider the following 669-residue polypeptide: Dymeclin (669 aa).

Residue G2 is the site of N-myristoyl glycine attachment.

It belongs to the dymeclin family. In terms of assembly, interacts with GOLM1 and PPIB. In terms of processing, myristoylated in vitro; myristoylation is not essential for protein targeting to Golgi compartment. Expressed in most embryo-fetal and adult tissues. Abundant in primary chondrocytes, osteoblasts, cerebellum, kidney, lung, stomach, heart, pancreas and fetal brain. Very low or no expression in the spleen, thymus, esophagus, bladder and thyroid gland.

The protein localises to the cytoplasm. It is found in the golgi apparatus. Its subcellular location is the membrane. Functionally, necessary for correct organization of Golgi apparatus. Involved in bone development. This chain is Dymeclin (DYM), found in Homo sapiens (Human).